Consider the following 85-residue polypeptide: MAADHYVYVLSCADETLYTGYTTNVERRVAEHDAGEGAKYTRGRTPVELVHTERFDSKSAAMQREHEIKSLSRAKKERLVADETG.

The GIY-YIG domain occupies 3-78; the sequence is ADHYVYVLSC…KSLSRAKKER (76 aa). Residues 58-70 are compositionally biased toward basic and acidic residues; it reads KSAAMQREHEIKS. Residues 58-85 form a disordered region; the sequence is KSAAMQREHEIKSLSRAKKERLVADETG.

The protein belongs to the UPF0213 family.

The polypeptide is UPF0213 protein NP_0776A (Natronomonas pharaonis (strain ATCC 35678 / DSM 2160 / CIP 103997 / JCM 8858 / NBRC 14720 / NCIMB 2260 / Gabara) (Halobacterium pharaonis)).